The sequence spans 373 residues: Cobalt-precorrin-5B C(1)-methyltransferase (373 aa).

It belongs to the CbiD family.

It catalyses the reaction Co-precorrin-5B + S-adenosyl-L-methionine = Co-precorrin-6A + S-adenosyl-L-homocysteine. The protein operates within cofactor biosynthesis; adenosylcobalamin biosynthesis; cob(II)yrinate a,c-diamide from sirohydrochlorin (anaerobic route): step 6/10. Its function is as follows. Catalyzes the methylation of C-1 in cobalt-precorrin-5B to form cobalt-precorrin-6A. The polypeptide is Cobalt-precorrin-5B C(1)-methyltransferase (Polaromonas sp. (strain JS666 / ATCC BAA-500)).